A 361-amino-acid polypeptide reads, in one-letter code: MGNIHIQTKSKEYDVYVGKESLSHLTTIVQNMQPSVSNIMIISDEAVASLHLQTVVDALQIDRKVFSFVVPSGEKEKSFENFYAAHTSALENKLDRNSLIVALGGGMIGDLAGFVAASFMRGIRFVQVPTTLLAHDSAVGGKVAINHPLGKNMIGAFHQPEAVVYHTPFLQSLPEKEWRSGYAEVIKHALIGDVKLYHWLKEDVQTLADLRDEKLIHILTKAIPVKANIVAQDETEKGVRAHLNFGHTLGHALEKELGYGNITHGDGVAVGMLFAIFLSEQVYKVNLAYEEMKQWFLKYGYPKMPSDLSVERLVQLMKQDKKANAGTIHMVLMQEYGVVNVVSIPDETVHIALEAFQKDMF.

NAD(+) is bound by residues 72–77 (SGEKEK), 130–131 (TT), Lys-142, and Lys-151. Zn(2+)-binding residues include Glu-184, His-247, and His-264.

Belongs to the sugar phosphate cyclases superfamily. Dehydroquinate synthase family. It depends on Co(2+) as a cofactor. Zn(2+) serves as cofactor. NAD(+) is required as a cofactor.

The protein resides in the cytoplasm. It carries out the reaction 7-phospho-2-dehydro-3-deoxy-D-arabino-heptonate = 3-dehydroquinate + phosphate. It functions in the pathway metabolic intermediate biosynthesis; chorismate biosynthesis; chorismate from D-erythrose 4-phosphate and phosphoenolpyruvate: step 2/7. Catalyzes the conversion of 3-deoxy-D-arabino-heptulosonate 7-phosphate (DAHP) to dehydroquinate (DHQ). The protein is 3-dehydroquinate synthase of Bacillus cereus (strain ZK / E33L).